Consider the following 144-residue polypeptide: D-aminoacyl-tRNA deacylase (144 aa).

Residues 136–137 carry the Gly-cisPro motif, important for rejection of L-amino acids motif; that stretch reads GP.

This sequence belongs to the DTD family. In terms of assembly, homodimer.

Its subcellular location is the cytoplasm. It catalyses the reaction glycyl-tRNA(Ala) + H2O = tRNA(Ala) + glycine + H(+). It carries out the reaction a D-aminoacyl-tRNA + H2O = a tRNA + a D-alpha-amino acid + H(+). An aminoacyl-tRNA editing enzyme that deacylates mischarged D-aminoacyl-tRNAs. Also deacylates mischarged glycyl-tRNA(Ala), protecting cells against glycine mischarging by AlaRS. Acts via tRNA-based rather than protein-based catalysis; rejects L-amino acids rather than detecting D-amino acids in the active site. By recycling D-aminoacyl-tRNA to D-amino acids and free tRNA molecules, this enzyme counteracts the toxicity associated with the formation of D-aminoacyl-tRNA entities in vivo and helps enforce protein L-homochirality. This Glaesserella parasuis serovar 5 (strain SH0165) (Haemophilus parasuis) protein is D-aminoacyl-tRNA deacylase.